Here is a 271-residue protein sequence, read N- to C-terminus: Expansin-B1 (271 aa).

The first 24 residues, 1-24, serve as a signal peptide directing secretion; sequence MQLFPVILPTLCVFLHLLISGSGS. Residues 58-169 enclose the Expansin-like EG45 domain; it reads GGACGYGSLV…RRTACKYRGK (112 aa). Intrachain disulfides connect C61–C90, C93–C164, and C98–C104. In terms of domain architecture, Expansin-like CBD spans 182–263; sequence YWLSLLIEYE…NWVPKATYTS (82 aa). N242 carries N-linked (GlcNAc...) asparagine glycosylation.

Belongs to the expansin family. Expansin B subfamily.

It localises to the secreted. The protein resides in the cell wall. It is found in the membrane. May cause loosening and extension of plant cell walls by disrupting non-covalent bonding between cellulose microfibrils and matrix glucans. No enzymatic activity has been found. This Arabidopsis thaliana (Mouse-ear cress) protein is Expansin-B1 (EXPB1).